The chain runs to 371 residues: Poly(rC)-binding protein 3 (371 aa).

KH domains follow at residues Thr-45–Gly-95, Pro-129–Gly-182, and Ala-293–Ile-357.

As to expression, widely expressed, with highest levels in testis and fat tissues and lowest in heart.

The protein resides in the cytoplasm. Single-stranded nucleic acid binding protein that binds preferentially to oligo dC. The protein is Poly(rC)-binding protein 3 (Pcbp3) of Mus musculus (Mouse).